Consider the following 239-residue polypeptide: Tetraspanin-9 (239 aa).

The Cytoplasmic portion of the chain corresponds to 1–13; sequence MARGCLCCLKYTM. A helical transmembrane segment spans residues 14–34; the sequence is FLFNLIFWLCGCGLLGVGIWL. Residues 35-55 lie on the Extracellular side of the membrane; it reads SVSQGNFATFSPSFPSLSAAN. A helical transmembrane segment spans residues 56 to 76; that stretch reads LVIAIGTIVMVTGFLGCLGAI. Residues 77-85 are Cytoplasmic-facing; that stretch reads KENKCLLLS. Residues 86–106 traverse the membrane as a helical segment; it reads FFIVLLIILLAELILIILFFV. The Extracellular segment spans residues 107–203; that stretch reads YMDKVNENAK…VKLWFDDNKH (97 aa). Residue N180 is glycosylated (N-linked (GlcNAc...) asparagine). A helical transmembrane segment spans residues 204–224; that stretch reads VLGTVGMCILIMQILGMAFSM. The Cytoplasmic segment spans residues 225-239; that stretch reads TLFQHIHRTGKKYDA.

Belongs to the tetraspanin (TM4SF) family. In terms of assembly, found in a complex with GP6. Glycosylated. In terms of tissue distribution, strongly expressed in megakaryocytes, platelets and lung. Weakly expressed in bone marrow, brain and kidney (at protein level).

The protein localises to the membrane. This Mus musculus (Mouse) protein is Tetraspanin-9 (Tspan9).